The following is an 89-amino-acid chain: Putative membrane protein insertion efficiency factor (89 aa).

The segment at 69–89 (DPVPPAHTERGGTMCPSRLPE) is disordered.

Belongs to the UPF0161 family.

It is found in the cell inner membrane. Its function is as follows. Could be involved in insertion of integral membrane proteins into the membrane. In Paramagnetospirillum magneticum (strain ATCC 700264 / AMB-1) (Magnetospirillum magneticum), this protein is Putative membrane protein insertion efficiency factor.